The chain runs to 421 residues: UDP-N-acetylglucosamine 1-carboxyvinyltransferase (421 aa).

22–23 (KN) contacts phosphoenolpyruvate. Residue arginine 93 coordinates UDP-N-acetyl-alpha-D-glucosamine. The active-site Proton donor is cysteine 117. A 2-(S-cysteinyl)pyruvic acid O-phosphothioketal modification is found at cysteine 117. UDP-N-acetyl-alpha-D-glucosamine contacts are provided by residues 122-126 (RPVDL), aspartate 308, and valine 330.

This sequence belongs to the EPSP synthase family. MurA subfamily.

The protein resides in the cytoplasm. It carries out the reaction phosphoenolpyruvate + UDP-N-acetyl-alpha-D-glucosamine = UDP-N-acetyl-3-O-(1-carboxyvinyl)-alpha-D-glucosamine + phosphate. It participates in cell wall biogenesis; peptidoglycan biosynthesis. Cell wall formation. Adds enolpyruvyl to UDP-N-acetylglucosamine. This Azotobacter vinelandii (strain DJ / ATCC BAA-1303) protein is UDP-N-acetylglucosamine 1-carboxyvinyltransferase.